The chain runs to 406 residues: Exodeoxyribonuclease 7 large subunit (406 aa).

The protein belongs to the XseA family. Heterooligomer composed of large and small subunits.

It localises to the cytoplasm. The enzyme catalyses Exonucleolytic cleavage in either 5'- to 3'- or 3'- to 5'-direction to yield nucleoside 5'-phosphates.. Functionally, bidirectionally degrades single-stranded DNA into large acid-insoluble oligonucleotides, which are then degraded further into small acid-soluble oligonucleotides. This chain is Exodeoxyribonuclease 7 large subunit, found in Desulforudis audaxviator (strain MP104C).